The sequence spans 311 residues: MASSETLTITDYITHHLQNMTYGKLPAGYARHHADGEVHVLEHDTWTMAHTAEEAAAMGFNAVHVDTLGWGIFLALVVGFFMRRVAVKATTDTPRGMASFIEFLVEGINGVVKDVFHHKNRLVAPMAITVFSWVFMMNLMDLIPVDWLPMAAQIVSGNEHLFFKVVPTTDPNATLGMAVTVFILMLFFSVQQKGLWGFIKELTCHPFFAPRKFWYFNLILIPFNFILETVALIAKPISLGLRLFGNLYAGEMIFILIATLFSVGLLFGFLGGILQFGWAVLHILVILIQAFVFMVLTTVYMAMAHDRHDEH.

6 consecutive transmembrane segments (helical) span residues 62 to 82, 123 to 143, 179 to 199, 213 to 233, 253 to 273, and 276 to 296; these read AVHV…GFFM, VAPM…MDLI, VTVF…WGFI, FWYF…VALI, IFIL…LGGI, and FGWA…FMVL.

This sequence belongs to the ATPase A chain family. In terms of assembly, F-type ATPases have 2 components, CF(1) - the catalytic core - and CF(0) - the membrane proton channel. CF(1) has five subunits: alpha(3), beta(3), gamma(1), delta(1), epsilon(1). CF(0) has three main subunits: a(1), b(2) and c(9-12). The alpha and beta chains form an alternating ring which encloses part of the gamma chain. CF(1) is attached to CF(0) by a central stalk formed by the gamma and epsilon chains, while a peripheral stalk is formed by the delta and b chains.

Its subcellular location is the cell inner membrane. Its function is as follows. Key component of the proton channel; it plays a direct role in the translocation of protons across the membrane. In Teredinibacter turnerae (strain ATCC 39867 / T7901), this protein is ATP synthase subunit a.